A 408-amino-acid chain; its full sequence is UDP-N-acetylglucosamine--N-acetylmuramyl-(pentapeptide) pyrophosphoryl-undecaprenol N-acetylglucosamine transferase (408 aa).

Residues 1-20 (MNDTVKKPTGGRGDDPLPAG) form a disordered region. UDP-N-acetyl-alpha-D-glucosamine contacts are provided by residues 41–43 (TAG), asparagine 160, arginine 197, serine 231, and glutamine 327.

Belongs to the glycosyltransferase 28 family. MurG subfamily.

The protein localises to the cell membrane. It carries out the reaction di-trans,octa-cis-undecaprenyl diphospho-N-acetyl-alpha-D-muramoyl-L-alanyl-D-glutamyl-meso-2,6-diaminopimeloyl-D-alanyl-D-alanine + UDP-N-acetyl-alpha-D-glucosamine = di-trans,octa-cis-undecaprenyl diphospho-[N-acetyl-alpha-D-glucosaminyl-(1-&gt;4)]-N-acetyl-alpha-D-muramoyl-L-alanyl-D-glutamyl-meso-2,6-diaminopimeloyl-D-alanyl-D-alanine + UDP + H(+). It participates in cell wall biogenesis; peptidoglycan biosynthesis. Its function is as follows. Cell wall formation. Catalyzes the transfer of a GlcNAc subunit on undecaprenyl-pyrophosphoryl-MurNAc-pentapeptide (lipid intermediate I) to form undecaprenyl-pyrophosphoryl-MurNAc-(pentapeptide)GlcNAc (lipid intermediate II). This Mycolicibacterium paratuberculosis (strain ATCC BAA-968 / K-10) (Mycobacterium paratuberculosis) protein is UDP-N-acetylglucosamine--N-acetylmuramyl-(pentapeptide) pyrophosphoryl-undecaprenol N-acetylglucosamine transferase.